The primary structure comprises 211 residues: Envelope glycoprotein (211 aa).

Over 1–151 (QFKRRAKYKR…FNKSPWFTTL (151 aa)) the chain is Extracellular. The fusion peptide stretch occupies residues 13 to 33 (VSLTLALLLGGLTMGGIAAGV). 2 coiled-coil regions span residues 41-90 (VATQ…LLFL) and 100-136 (KEECCFYADHTGLVRDSMAKLRERLSQRQKLFESQQG). The interval 79–95 (LQNRRGLDLLFLKEGGL) is immunosuppression. The CX6CC motif lies at 96–104 (CAALKEECC). The helical transmembrane segment at 152-172 (ISTIMGPLIILLLILLFGPCI) threads the bilayer. Cys171 is lipidated: S-palmitoyl cysteine; by host. Topologically, residues 173–211 (LNRLVQFIKDRISVVQALVLTQQYHQLKSIDPEKVESRE) are cytoplasmic. A YXXL motif; contains endocytosis signal motif is present at residues 196-199 (YHQL).

As to quaternary structure, the mature envelope protein (Env) consists of a trimer of SU-TM heterodimers attached by a labile interchain disulfide bond. In terms of processing, specific enzymatic cleavages in vivo yield mature proteins. Envelope glycoproteins are synthesized as an inactive precursor that is N-glycosylated and processed likely by host cell furin or by a furin-like protease in the Golgi to yield the mature SU and TM proteins. The cleavage site between SU and TM requires the minimal sequence [KR]-X-[KR]-R. The R-peptide is released from the C-terminus of the cytoplasmic tail of the TM protein upon particle formation as a result of proteolytic cleavage by the viral protease. Cleavage of this peptide is required for TM to become fusogenic. Post-translationally, the CXXC motif is highly conserved across a broad range of retroviral envelope proteins. It is thought to participate in the formation of a labile disulfide bond possibly with the CX6CC motif present in the transmembrane protein. Isomerization of the intersubunit disulfide bond to an SU intrachain disulfide bond is thought to occur upon receptor recognition in order to allow membrane fusion. The transmembrane protein is palmitoylated. In terms of processing, the R-peptide is palmitoylated.

It is found in the virion membrane. The protein localises to the host cell membrane. The surface protein (SU) attaches the virus to the host cell by binding to its receptor. This interaction triggers the refolding of the transmembrane protein (TM) and is thought to activate its fusogenic potential by unmasking its fusion peptide. Fusion occurs at the host cell plasma membrane. Its function is as follows. The transmembrane protein (TM) acts as a class I viral fusion protein. Under the current model, the protein has at least 3 conformational states: pre-fusion native state, pre-hairpin intermediate state, and post-fusion hairpin state. During viral and target cell membrane fusion, the coiled coil regions (heptad repeats) assume a trimer-of-hairpins structure, positioning the fusion peptide in close proximity to the C-terminal region of the ectodomain. The formation of this structure appears to drive apposition and subsequent fusion of viral and target cell membranes. Membranes fusion leads to delivery of the nucleocapsid into the cytoplasm. This Mus musculus (Mouse) protein is Envelope glycoprotein (env).